The sequence spans 375 residues: Eukaryotic translation initiation factor 3 subunit M (375 aa).

The 160-residue stretch at 180-339 folds into the PCI domain; sequence AAAKVMVELL…RKVVVSHSTH (160 aa).

Belongs to the eIF-3 subunit M family. In terms of assembly, component of the eukaryotic translation initiation factor 3 (eIF-3) complex, which is composed of 13 subunits: eif3a, eif3b, eif3c, eif3d, eif3e, eif3f, eif3g, eif3h, eif3i, eif3j, eif3k, eif3l and eif3m.

The protein localises to the cytoplasm. Functionally, component of the eukaryotic translation initiation factor 3 (eIF-3) complex, which is involved in protein synthesis of a specialized repertoire of mRNAs and, together with other initiation factors, stimulates binding of mRNA and methionyl-tRNAi to the 40S ribosome. The eIF-3 complex specifically targets and initiates translation of a subset of mRNAs involved in cell proliferation. The sequence is that of Eukaryotic translation initiation factor 3 subunit M (eif3m) from Danio rerio (Zebrafish).